A 238-amino-acid polypeptide reads, in one-letter code: Phosphoribosylaminoimidazole-succinocarboxamide synthase (238 aa).

This sequence belongs to the SAICAR synthetase family.

It catalyses the reaction 5-amino-1-(5-phospho-D-ribosyl)imidazole-4-carboxylate + L-aspartate + ATP = (2S)-2-[5-amino-1-(5-phospho-beta-D-ribosyl)imidazole-4-carboxamido]succinate + ADP + phosphate + 2 H(+). The protein operates within purine metabolism; IMP biosynthesis via de novo pathway; 5-amino-1-(5-phospho-D-ribosyl)imidazole-4-carboxamide from 5-amino-1-(5-phospho-D-ribosyl)imidazole-4-carboxylate: step 1/2. This is Phosphoribosylaminoimidazole-succinocarboxamide synthase from Chlorobium phaeovibrioides (strain DSM 265 / 1930) (Prosthecochloris vibrioformis (strain DSM 265)).